We begin with the raw amino-acid sequence, 125 residues long: Large ribosomal subunit protein uL22c (125 aa).

The protein belongs to the universal ribosomal protein uL22 family. In terms of assembly, part of the 50S ribosomal subunit.

Its subcellular location is the plastid. The protein localises to the chloroplast. Its function is as follows. This protein binds specifically to 23S rRNA. Functionally, the globular domain of the protein is located near the polypeptide exit tunnel on the outside of the subunit, while an extended beta-hairpin is found that lines the wall of the exit tunnel in the center of the 70S ribosome. The chain is Large ribosomal subunit protein uL22c (rpl22) from Nymphaea alba (White water-lily).